We begin with the raw amino-acid sequence, 360 residues long: DNA primase large subunit PriL (360 aa).

[4Fe-4S] cluster is bound by residues Cys237, Cys309, Cys318, and Cys325. The tract at residues 340–360 (DDGDDDDLADWRDREDDDSPD) is disordered.

Belongs to the eukaryotic-type primase large subunit family. As to quaternary structure, heterodimer of a small subunit (PriS) and a large subunit (PriL). It depends on [4Fe-4S] cluster as a cofactor.

Regulatory subunit of DNA primase, an RNA polymerase that catalyzes the synthesis of short RNA molecules used as primers for DNA polymerase during DNA replication. Stabilizes and modulates the activity of the small subunit, increasing the rate of DNA synthesis, and conferring RNA synthesis capability. The DNA polymerase activity may enable DNA primase to also catalyze primer extension after primer synthesis. May also play a role in DNA repair. The protein is DNA primase large subunit PriL of Halobacterium salinarum (strain ATCC 29341 / DSM 671 / R1).